Consider the following 182-residue polypeptide: MGSVSSRGHRAEAQVVMMGLDSAGKTTLLYRLKGYQLVETLPTVGFNVEPLEEPGHVSLTLWDVGGQSQLRASWKDHLEGTDILVYVLDSTDEARLPEAVAELREVLDDPSVASVPLLVLANKQEVPQALSLPEIRDRLGLQGFLGRSWDLRACSALTGAGLPEALESLRSLLKSCSLCMAR.

Residue Gly2 is the site of N-myristoyl glycine attachment. Residues 19–26, 63–67, and 122–125 contribute to the GTP site; these read GLDSAGKT, DVGGQ, and NKQE.

It belongs to the small GTPase superfamily. Arf family.

Functionally, may play a role in apoptosis. May act as a tumor suppressor. This chain is ADP-ribosylation factor-like protein 11 (ARL11), found in Bos taurus (Bovine).